Here is a 172-residue protein sequence, read N- to C-terminus: Trypsin inhibitor 1B (172 aa).

2 disulfide bridges follow: cysteine 40–cysteine 84 and cysteine 133–cysteine 139.

Belongs to the protease inhibitor I3 (leguminous Kunitz-type inhibitor) family.

WTI-1B inhibits trypsin stoichiometrically. The protein is Trypsin inhibitor 1B of Psophocarpus tetragonolobus (Winged bean).